Reading from the N-terminus, the 258-residue chain is Ciliogenesis and planar polarity effector 2 (258 aa).

Residues 51–258 (IDTASYKIFV…LPSSPESAPG (208 aa)) form a small GTPase-like region. Positions 64, 65, 67, 68, 69, 70, 82, 84, 87, 176, 178, and 206 each coordinate GTP.

The protein belongs to the small GTPase superfamily. Rab family. In terms of assembly, interacts with FUZ. Associates with the CPLANE (ciliogenesis and planar polarity effectors) complex via its interaction with FUZ.

The protein localises to the cytoplasm. It is found in the cytoskeleton. It localises to the cilium basal body. The protein resides in the microtubule organizing center. Its subcellular location is the centrosome. The protein localises to the centriole. Its function is as follows. Required for efficient primary cilia initiation, regulating a late step in cilia initiation. Plays a role in the final maturation of the mother centriole and ciliary vesicle that allows extension of the ciliary axoneme. The polypeptide is Ciliogenesis and planar polarity effector 2 (Cplane2) (Mus musculus (Mouse)).